Consider the following 93-residue polypeptide: Small ribosomal subunit protein uS19c (93 aa).

The protein belongs to the universal ribosomal protein uS19 family.

Its subcellular location is the plastid. The protein resides in the chloroplast. Functionally, protein S19 forms a complex with S13 that binds strongly to the 16S ribosomal RNA. This is Small ribosomal subunit protein uS19c (rps19-A) from Zea mays (Maize).